We begin with the raw amino-acid sequence, 148 residues long: Cytochrome c oxidase subunit 4, mitochondrial (148 aa).

Residues 1 to 24 (MFALRSIRSATKAFQTTSIVSQRG) constitute a mitochondrion transit peptide.

As to quaternary structure, slime mold cytochrome c oxidase consists of at least seven different polypeptides species, subunits I, II, III, IV, V, VI, and VIIe/s in order of MW.

The protein localises to the mitochondrion inner membrane. The enzyme catalyses 4 Fe(II)-[cytochrome c] + O2 + 8 H(+)(in) = 4 Fe(III)-[cytochrome c] + 2 H2O + 4 H(+)(out). Its function is as follows. This protein is one of the nuclear-coded polypeptide chains of cytochrome c oxidase, the terminal oxidase in mitochondrial electron transport. The protein is Cytochrome c oxidase subunit 4, mitochondrial (cxdA) of Dictyostelium discoideum (Social amoeba).